The primary structure comprises 150 residues: MMVKLLLLFLVCWSALPLESSPLGNRYNLEIGEKQYYISLAKTNWFEASNHCRQNGGFLLNLESREELELLSPHLHPAYSYWLSINDLGERGVYVSEATGLEAPFLNWSAGEPDNSSGYDRCVELWLSTTSFQMNDLPCYSSVAFICQLN.

The first 20 residues, 1–20 (MMVKLLLLFLVCWSALPLES), serve as a signal peptide directing secretion. The C-type lectin domain occupies 31–148 (IGEKQYYISL…CYSSVAFICQ (118 aa)). Intrachain disulfides connect Cys52-Cys147 and Cys122-Cys139. N-linked (GlcNAc...) asparagine glycosylation is found at Asn107 and Asn115.

It is found in the secreted. Galactose-specific lectin that displays calcium-dependent activity. Binds to the surface of hemocytes and enhances hemocyte encapsulation and melanization. This is likely by interacting with carbohydrates on the surface of the hemocytes. Also displays agglutination activity against the Gram-negative bacterium E.coli. The sequence is that of C-type lectin 37Db from Drosophila melanogaster (Fruit fly).